Reading from the N-terminus, the 213-residue chain is ATP phosphoribosyltransferase (213 aa).

This sequence belongs to the ATP phosphoribosyltransferase family. Short subfamily. In terms of assembly, heteromultimer composed of HisG and HisZ subunits.

The protein resides in the cytoplasm. The catalysed reaction is 1-(5-phospho-beta-D-ribosyl)-ATP + diphosphate = 5-phospho-alpha-D-ribose 1-diphosphate + ATP. Its pathway is amino-acid biosynthesis; L-histidine biosynthesis; L-histidine from 5-phospho-alpha-D-ribose 1-diphosphate: step 1/9. Its function is as follows. Catalyzes the condensation of ATP and 5-phosphoribose 1-diphosphate to form N'-(5'-phosphoribosyl)-ATP (PR-ATP). Has a crucial role in the pathway because the rate of histidine biosynthesis seems to be controlled primarily by regulation of HisG enzymatic activity. In Listeria monocytogenes serotype 4a (strain HCC23), this protein is ATP phosphoribosyltransferase.